A 515-amino-acid polypeptide reads, in one-letter code: Putative acetolactate synthase large subunit IlvX (515 aa).

Thiamine diphosphate is bound at residue Glu-48. FAD-binding positions include 249–269 (FAEG…AGAR) and 283–302 (DLVP…GAAD). Residues 357–436 (TCGVLLPQAT…VTTVIYNNGA (80 aa)) form a thiamine pyrophosphate binding region. Positions 407 and 434 each coordinate Mg(2+).

It belongs to the TPP enzyme family. As to quaternary structure, heterodimer of large catalytic subunit and small regulatory subunit. The cofactor is Mg(2+). Requires thiamine diphosphate as cofactor.

It catalyses the reaction 2 pyruvate + H(+) = (2S)-2-acetolactate + CO2. Its pathway is amino-acid biosynthesis; L-isoleucine biosynthesis; L-isoleucine from 2-oxobutanoate: step 1/4. The protein operates within amino-acid biosynthesis; L-valine biosynthesis; L-valine from pyruvate: step 1/4. Catalyzes the conversion of 2 pyruvate molecules into acetolactate in the first common step of the biosynthetic pathway of the branched-amino acids such as leucine, isoleucine, and valine. This is Putative acetolactate synthase large subunit IlvX (ilvX) from Mycobacterium tuberculosis (strain ATCC 25618 / H37Rv).